Consider the following 386-residue polypeptide: MFPRVSAVLPFRPLSRLPLCSAGPEASAATVVPLASPHGTVRTKCNIQRYFGTNSVIYSKKDDKSVPACEISKETENQGSTKENKKKDLVNIIKGMKVELSTVNVQTTKPPNRGQLKSLEAAIRRLQKSPEDAPQKSKSLSPELVAAATAVADSLPFDKQTTKSELLRQLRQHEEDSKAQKDGEKPKISFSNIISDMKVARSSTARASTRPVHQIQFDEGADDFVDREETADLRKRFRKNIFKGKRLNIFELKPVTEEAPETEAAPSLWDVEFAKQLAAVTEQPFQNGFEEMIQWTKEGKLWEFPINNEAGFDDDGSEFHEHIFLDKYLEGFPKQGPIRHFMELVTCGLSKNPYLSVKQKVEHIEWFRNYFNEKQDILKESGINFS.

It belongs to the mitochondrion-specific ribosomal protein mS31 family. Component of the mitochondrial ribosome small subunit (28S) which comprises a 12S rRNA and about 30 distinct proteins.

It localises to the mitochondrion. The protein is Small ribosomal subunit protein mS31 (MRPS31) of Bos taurus (Bovine).